The chain runs to 753 residues: 5-methyltetrahydropteroyltriglutamate--homocysteine methyltransferase (753 aa).

5-methyltetrahydropteroyltri-L-glutamate-binding positions include 17–20 (RELK) and lysine 117. Residues 431 to 433 (IGS) and glutamate 484 contribute to the L-homocysteine site. L-methionine is bound by residues 431-433 (IGS) and glutamate 484. Residues 515-516 (RC) and tryptophan 561 each bind 5-methyltetrahydropteroyltri-L-glutamate. Residue aspartate 599 coordinates L-homocysteine. Aspartate 599 is an L-methionine binding site. Position 605 (glutamate 605) interacts with 5-methyltetrahydropteroyltri-L-glutamate. Zn(2+) is bound by residues histidine 641, cysteine 643, and glutamate 665. The active-site Proton donor is the histidine 694. Residue cysteine 726 participates in Zn(2+) binding.

The protein belongs to the vitamin-B12 independent methionine synthase family. Zn(2+) serves as cofactor.

The catalysed reaction is 5-methyltetrahydropteroyltri-L-glutamate + L-homocysteine = tetrahydropteroyltri-L-glutamate + L-methionine. Its pathway is amino-acid biosynthesis; L-methionine biosynthesis via de novo pathway; L-methionine from L-homocysteine (MetE route): step 1/1. In terms of biological role, catalyzes the transfer of a methyl group from 5-methyltetrahydrofolate to homocysteine resulting in methionine formation. The protein is 5-methyltetrahydropteroyltriglutamate--homocysteine methyltransferase of Escherichia coli O7:K1 (strain IAI39 / ExPEC).